A 614-amino-acid polypeptide reads, in one-letter code: MVNVSESSPIDDKKARLKHLIQRLPNLPGVYKMLGKNGDILYVGKAKSLKSRVNSYFAKTIDHPKTRALVARIHNIETIITRSETEALLLEQNLIKEYRPPYNVLLRDDKSYLYVFISADKPYPRLAYGRGKGNHQKGRFFGPFPSAHAAKETLVLMQKMFQMRQCTNTFFKQRKRPCLEYQIKRCRAPCVGLVSPEEYSEDVNNTIRFLKGDSSDIHTALIEKMEASAEELDFEKAVFYRDQLSMLREVQAKQAVYTVQGEADVIAIASQGGMTCVNVLTVRGGRVLGGKNYFPDVDSSEPLADNLSAFITSFYFQVTDDLPAEIILSDELPDQLAVSEALATHFGSKVVIKTSVREHRAEWLDLAKLNTNNALKTKLGDYLELHARFGALKDVLTEVTDRTIDRIECFDISHTMGEATIGSCVVFDQGGSRRRDYRQYAIHDIVGGDDYAAMKQVLTRRYKKQPLPDLLLIDGGKGQLGIAKEVLTELGILGDTLLISVAKGEGRKAGLEVLHFIDHEPLDLPMDSKALHLLMHIRDEAHRFAITAHRKKRDKRRSSSVLEVIPGLGEKRRRDLLNHFGGMQQLLGASQQELAGVQGIGPVLAKTVYKVLHE.

The GIY-YIG domain occupies 26–104; it reads NLPGVYKMLG…IKEYRPPYNV (79 aa). The region spanning 215–250 is the UVR domain; the sequence is SDIHTALIEKMEASAEELDFEKAVFYRDQLSMLREV.

It belongs to the UvrC family. In terms of assembly, interacts with UvrB in an incision complex.

The protein localises to the cytoplasm. The UvrABC repair system catalyzes the recognition and processing of DNA lesions. UvrC both incises the 5' and 3' sides of the lesion. The N-terminal half is responsible for the 3' incision and the C-terminal half is responsible for the 5' incision. The sequence is that of UvrABC system protein C from Psychrobacter cryohalolentis (strain ATCC BAA-1226 / DSM 17306 / VKM B-2378 / K5).